A 740-amino-acid polypeptide reads, in one-letter code: Isocitrate dehydrogenase [NADP] 2 (740 aa).

NADP(+) is bound by residues asparagine 83 and serine 85. Residues serine 130, asparagine 133, arginine 137, arginine 143, and lysine 253 each contribute to the D-threo-isocitrate site. Asparagine 133 is an NADP(+) binding site. Residue aspartate 348 coordinates Mg(2+). Positions 418 and 546 each coordinate D-threo-isocitrate. 2 residues coordinate Mg(2+): aspartate 547 and aspartate 551. The NADP(+) site is built by serine 584, histidine 588, arginine 599, aspartate 601, and arginine 648.

This sequence belongs to the monomeric-type IDH family. As to quaternary structure, monomer. Mg(2+) serves as cofactor. Mn(2+) is required as a cofactor.

It carries out the reaction D-threo-isocitrate + NADP(+) = 2-oxoglutarate + CO2 + NADPH. IDH activity is not significantly affected by monovalent cations. The combined addition of Mn(2+) and another divalent cation results in the decrease of the activity. Functionally, catalyzes the oxidative decarboxylation of isocitrate to 2-oxoglutarate and carbon dioxide with the concomitant reduction of NADP(+). Cannot use NAD(+). The sequence is that of Isocitrate dehydrogenase [NADP] 2 from Psychrobacter sp. (strain 13A).